Consider the following 238-residue polypeptide: MKPEQFVHALKEKGINLSEKQTEQFYIYFQELVEWNQKVNLTAITDQEEVYVKHFYDCVTAAFYHDFNQEISICDIGAGAGFPSIPLKIVFPQLKITIVDSLKKRITFLNHLATKLELSNVAFYHDRAENFGKNKTFRESFDIVTARAVARMSVLSELCLPLVKKNGVFIAMKGAQAKEELEVGKPAIELLGGEVEEIHTFSLPIEESERSIILISKKRQTPKKYPRKAGLPNKEPIE.

Residues Gly77, Phe82, 128 to 129 (AE), and Arg147 contribute to the S-adenosyl-L-methionine site. A disordered region spans residues 219–238 (RQTPKKYPRKAGLPNKEPIE).

This sequence belongs to the methyltransferase superfamily. RNA methyltransferase RsmG family.

It localises to the cytoplasm. Functionally, specifically methylates the N7 position of guanine in position 535 of 16S rRNA. This chain is Ribosomal RNA small subunit methyltransferase G, found in Oceanobacillus iheyensis (strain DSM 14371 / CIP 107618 / JCM 11309 / KCTC 3954 / HTE831).